Consider the following 154-residue polypeptide: MGLSDGEWELVLKTWGKVEADIPGHGETVFVRLFTGHPETLEKFDKFKHLKTEGEMKASEDLKKQGVTVLTALGGILKKKGHHEAEIQPLAQSHATKHKIPIKYLEFISDAIIHVLQSKHPAEFGADAQGAMKKALELFRNDIAAKYKELGFQG.

The region spanning 2 to 148 (GLSDGEWELV…FRNDIAAKYK (147 aa)) is the Globin domain. Position 4 is a phosphoserine (serine 4). The residue at position 68 (threonine 68) is a Phosphothreonine. Histidine 94 serves as a coordination point for heme b.

The protein belongs to the globin family. In terms of assembly, monomeric.

The protein localises to the cytoplasm. Its subcellular location is the sarcoplasm. The catalysed reaction is Fe(III)-heme b-[protein] + nitric oxide + H2O = Fe(II)-heme b-[protein] + nitrite + 2 H(+). The enzyme catalyses H2O2 + AH2 = A + 2 H2O. Monomeric heme protein which primary function is to store oxygen and facilitate its diffusion within muscle tissues. Reversibly binds oxygen through a pentacoordinated heme iron and enables its timely and efficient release as needed during periods of heightened demand. Depending on the oxidative conditions of tissues and cells, and in addition to its ability to bind oxygen, it also has a nitrite reductase activity whereby it regulates the production of bioactive nitric oxide. Under stress conditions, like hypoxia and anoxia, it also protects cells against reactive oxygen species thanks to its pseudoperoxidase activity. The protein is Myoglobin (MB) of Elephas maximus (Indian elephant).